The following is an 89-amino-acid chain: Small ribosomal subunit protein bS20 (89 aa).

It belongs to the bacterial ribosomal protein bS20 family.

Functionally, binds directly to 16S ribosomal RNA. This chain is Small ribosomal subunit protein bS20, found in Helicobacter pylori (strain Shi470).